The following is an 847-amino-acid chain: DNA ligase (847 aa).

Positions 1-22 are enriched in low complexity; sequence MSDTTTGSDAADAAVPATTPAD. Residues 1-23 are disordered; sequence MSDTTTGSDAADAAVPATTPADL. NAD(+) contacts are provided by residues 54–58, 104–105, and Glu135; these read DAEYD and SL. Catalysis depends on Lys137, which acts as the N6-AMP-lysine intermediate. Residues Arg158, Glu195, Lys326, and Lys350 each contribute to the NAD(+) site. Cys444, Cys447, Cys463, and Cys469 together coordinate Zn(2+). The region spanning 686-775 is the BRCT domain; sequence AAGGVLAGLA…PDAIALPEAD (90 aa). Residues 770-847 are disordered; the sequence is ALPEADPVPD…AEPDGPAETP (78 aa). 2 stretches are compositionally biased toward low complexity: residues 786–807 and 819–833; these read DGGS…ATAE and PAAA…VEAG.

Belongs to the NAD-dependent DNA ligase family. LigA subfamily. Requires Mg(2+) as cofactor. It depends on Mn(2+) as a cofactor.

It carries out the reaction NAD(+) + (deoxyribonucleotide)n-3'-hydroxyl + 5'-phospho-(deoxyribonucleotide)m = (deoxyribonucleotide)n+m + AMP + beta-nicotinamide D-nucleotide.. In terms of biological role, DNA ligase that catalyzes the formation of phosphodiester linkages between 5'-phosphoryl and 3'-hydroxyl groups in double-stranded DNA using NAD as a coenzyme and as the energy source for the reaction. It is essential for DNA replication and repair of damaged DNA. In Clavibacter sepedonicus (Clavibacter michiganensis subsp. sepedonicus), this protein is DNA ligase.